Consider the following 884-residue polypeptide: DNA replication licensing factor mcm2 (884 aa).

Residues 1–16 are compositionally biased toward polar residues; sequence MADSSESFNIATSPRT. Disordered stretches follow at residues 1–61 and 120–151; these read MADS…IGDA and LYDS…EDEE. The segment covering 47-58 has biased composition (acidic residues); it reads PREEEEDGEELI. A C4-type zinc finger spans residues 314-340; sequence CNKCNFILGPFFQSQNQEVKPGSCPEC. The MCM domain maps to 458–664; sequence IGERIFASIA…VQDEMLARFV (207 aa). Positions 515 and 516 each coordinate ADP. Residues 640-643 carry the Arginine finger motif; that stretch reads SRFD.

It belongs to the MCM family. In terms of assembly, component of the mcm2-7 complex (RLF-M). The complex forms a toroidal hexameric ring with the proposed subunit order mcm2-mcm6-mcm4-mcm7-mcm3-mcm5. Component of the replisome complex. Component of the CMG helicase complex, composed of the mcm2-7 complex, the GINS complex and cdc45. In terms of processing, may be in a phosphorylated state in the mitotic mcm complex. Phosphorylated in the interphase mcm complex. Phosphorylated by the cdc7-dbf4 and cdc7-dbf4b complexes.

Its subcellular location is the nucleus. It localises to the chromosome. The catalysed reaction is ATP + H2O = ADP + phosphate + H(+). In terms of biological role, acts as a component of the MCM2-7 complex (MCM complex) which is the replicative helicase essential for 'once per cell cycle' DNA replication initiation and elongation in eukaryotic cells. Core component of CDC45-MCM-GINS (CMG) helicase, the molecular machine that unwinds template DNA during replication, and around which the replisome is built. The active ATPase sites in the MCM2-7 ring are formed through the interaction surfaces of two neighboring subunits such that a critical structure of a conserved arginine finger motif is provided in trans relative to the ATP-binding site of the Walker A box of the adjacent subunit. The six ATPase active sites, however, are likely to contribute differentially to the complex helicase activity. Required for the entry in S phase and for cell division. In Xenopus tropicalis (Western clawed frog), this protein is DNA replication licensing factor mcm2.